A 47-amino-acid chain; its full sequence is Conotoxin Bu10 (47 aa).

The propeptide occupies 1–22 (DSRGTQLHRALRKATILSVSAR). 3 cysteine pairs are disulfide-bonded: cysteine 23-cysteine 37, cysteine 30-cysteine 41, and cysteine 36-cysteine 46. A Cysteine amide modification is found at cysteine 46.

It belongs to the conotoxin O1 superfamily. In terms of tissue distribution, expressed by the venom duct.

It localises to the secreted. This chain is Conotoxin Bu10, found in Conus bullatus (Bubble cone).